The chain runs to 179 residues: TPD1 protein homolog 1 (179 aa).

The first 30 residues, 1-30 (MRMEHIYKFQHWLFFIGLGVLLSLSLSVKA), serve as a signal peptide directing secretion.

In Arabidopsis thaliana (Mouse-ear cress), this protein is TPD1 protein homolog 1.